Reading from the N-terminus, the 493-residue chain is Probable glycine dehydrogenase (decarboxylating) subunit 2 (493 aa).

N6-(pyridoxal phosphate)lysine is present on Lys-269.

The protein belongs to the GcvP family. C-terminal subunit subfamily. As to quaternary structure, the glycine cleavage system is composed of four proteins: P, T, L and H. In this organism, the P 'protein' is a heterodimer of two subunits. Pyridoxal 5'-phosphate is required as a cofactor.

It carries out the reaction N(6)-[(R)-lipoyl]-L-lysyl-[glycine-cleavage complex H protein] + glycine + H(+) = N(6)-[(R)-S(8)-aminomethyldihydrolipoyl]-L-lysyl-[glycine-cleavage complex H protein] + CO2. In terms of biological role, the glycine cleavage system catalyzes the degradation of glycine. The P protein binds the alpha-amino group of glycine through its pyridoxal phosphate cofactor; CO(2) is released and the remaining methylamine moiety is then transferred to the lipoamide cofactor of the H protein. This Chloroherpeton thalassium (strain ATCC 35110 / GB-78) protein is Probable glycine dehydrogenase (decarboxylating) subunit 2.